The primary structure comprises 239 residues: Type III effector protein HopBA1 (239 aa).

The segment covering 1–20 (MLNRISSSSPTSYVSSGSSS) has biased composition (low complexity). A disordered region spans residues 1 to 31 (MLNRISSSSPTSYVSSGSSSAGINPSINVRP).

Its subcellular location is the secreted. It is found in the host cell. In terms of biological role, virulence factor recognized by the A.thaliana disease resistance protein RBA1, which triggers plant cell death. HopBA1 enhances RBA1 self-association, which is necessary for ectopic autoactivation of host cell death. This is Type III effector protein HopBA1 from Pseudomonas syringae pv. aptata.